The chain runs to 353 residues: Photosystem II protein D1 (353 aa).

Thr2 bears the N-acetylthreonine mark. Thr2 carries the post-translational modification Phosphothreonine. The next 3 membrane-spanning stretches (helical) occupy residues 29-46, 118-133, and 142-156; these read YIGWFGVLMIPTLLTATS, HFLLGVACYMGREWEL, and WIAVAYSAPVAAATA. Residue His118 coordinates chlorophyll a. Residue Tyr126 coordinates pheophytin a. Asp170 and Glu189 together coordinate [CaMn4O5] cluster. Residues 197–218 form a helical membrane-spanning segment; that stretch reads FHMLGVAGVFGGSLFSAMHGSL. Chlorophyll a is bound at residue His198. A quinone contacts are provided by residues His215 and 264-265; that span reads SF. Residue His215 participates in Fe cation binding. His272 contributes to the Fe cation binding site. Residues 274 to 288 form a helical membrane-spanning segment; sequence FLAAWPVVGIWFTAL. Positions 332, 333, 342, and 344 each coordinate [CaMn4O5] cluster. Residues 345-353 constitute a propeptide that is removed on maturation; sequence GVEVPSTNG.

The protein belongs to the reaction center PufL/M/PsbA/D family. PSII is composed of 1 copy each of membrane proteins PsbA, PsbB, PsbC, PsbD, PsbE, PsbF, PsbH, PsbI, PsbJ, PsbK, PsbL, PsbM, PsbT, PsbX, PsbY, PsbZ, Psb30/Ycf12, at least 3 peripheral proteins of the oxygen-evolving complex and a large number of cofactors. It forms dimeric complexes. The D1/D2 heterodimer binds P680, chlorophylls that are the primary electron donor of PSII, and subsequent electron acceptors. It shares a non-heme iron and each subunit binds pheophytin, quinone, additional chlorophylls, carotenoids and lipids. D1 provides most of the ligands for the Mn4-Ca-O5 cluster of the oxygen-evolving complex (OEC). There is also a Cl(-1) ion associated with D1 and D2, which is required for oxygen evolution. The PSII complex binds additional chlorophylls, carotenoids and specific lipids. is required as a cofactor. Tyr-161 forms a radical intermediate that is referred to as redox-active TyrZ, YZ or Y-Z. Post-translationally, C-terminally processed by CTPA; processing is essential to allow assembly of the oxygen-evolving complex and thus photosynthetic growth.

It is found in the plastid. The protein resides in the chloroplast thylakoid membrane. The catalysed reaction is 2 a plastoquinone + 4 hnu + 2 H2O = 2 a plastoquinol + O2. Its function is as follows. Photosystem II (PSII) is a light-driven water:plastoquinone oxidoreductase that uses light energy to abstract electrons from H(2)O, generating O(2) and a proton gradient subsequently used for ATP formation. It consists of a core antenna complex that captures photons, and an electron transfer chain that converts photonic excitation into a charge separation. The D1/D2 (PsbA/PsbD) reaction center heterodimer binds P680, the primary electron donor of PSII as well as several subsequent electron acceptors. The polypeptide is Photosystem II protein D1 (Morus indica (Mulberry)).